The following is a 119-amino-acid chain: Ribonuclease P protein component (119 aa).

This sequence belongs to the RnpA family. As to quaternary structure, consists of a catalytic RNA component (M1 or rnpB) and a protein subunit.

It catalyses the reaction Endonucleolytic cleavage of RNA, removing 5'-extranucleotides from tRNA precursor.. Its function is as follows. RNaseP catalyzes the removal of the 5'-leader sequence from pre-tRNA to produce the mature 5'-terminus. It can also cleave other RNA substrates such as 4.5S RNA. The protein component plays an auxiliary but essential role in vivo by binding to the 5'-leader sequence and broadening the substrate specificity of the ribozyme. This is Ribonuclease P protein component from Bacillus cereus (strain ZK / E33L).